The chain runs to 189 residues: Peptidyl-tRNA hydrolase (189 aa).

Tyr-15 serves as a coordination point for tRNA. His-20 acts as the Proton acceptor in catalysis. The tRNA site is built by Tyr-65, Asn-67, and Asn-113.

It belongs to the PTH family. Monomer.

It localises to the cytoplasm. The catalysed reaction is an N-acyl-L-alpha-aminoacyl-tRNA + H2O = an N-acyl-L-amino acid + a tRNA + H(+). In terms of biological role, hydrolyzes ribosome-free peptidyl-tRNAs (with 1 or more amino acids incorporated), which drop off the ribosome during protein synthesis, or as a result of ribosome stalling. Functionally, catalyzes the release of premature peptidyl moieties from peptidyl-tRNA molecules trapped in stalled 50S ribosomal subunits, and thus maintains levels of free tRNAs and 50S ribosomes. In Caldicellulosiruptor saccharolyticus (strain ATCC 43494 / DSM 8903 / Tp8T 6331), this protein is Peptidyl-tRNA hydrolase.